Consider the following 243-residue polypeptide: Tyrosine recombinase XerD-like (243 aa).

One can recognise a Core-binding (CB) domain in the interval 1 to 72 (MKEYIRPFLN…AVNQFLYFLY (72 aa)). A Tyr recombinase domain is found at 85 to 243 (LPKVSVSKEQ…KTMITLEKYR (159 aa)). Catalysis depends on residues Lys-149 and Arg-210. Tyr-242 functions as the O-(3'-phospho-DNA)-tyrosine intermediate in the catalytic mechanism.

The protein belongs to the 'phage' integrase family. XerD-like subfamily.

The protein localises to the cytoplasm. Putative tyrosine recombinase. Not involved in the cutting and rejoining of the recombining DNA molecules on dif(SL) site. This Streptococcus sanguinis (strain SK36) protein is Tyrosine recombinase XerD-like.